The sequence spans 735 residues: Transcription factor RFX4 (735 aa).

Residues 25 to 59 (SESKRFSSHSSIGNISNDENEEKENNRASKPHSTP) are disordered. A DNA-binding region spans residues 44–126 (NEEKENNRAS…RRLGTRGQSK (83 aa)). The RFX-type winged-helix DNA-binding region spans 61 to 136 (TLQWLEENYE…YHYYGIAVKE (76 aa)). Residues 315-487 (RFSQILKRQT…NELMRAMKGE (173 aa)) are necessary for dimerization.

This sequence belongs to the RFX family.

It is found in the nucleus. In terms of biological role, may activate transcription by interacting directly with the X-box. The protein is Transcription factor RFX4 (rfx4) of Danio rerio (Zebrafish).